The sequence spans 616 residues: DEAD-box ATP-dependent RNA helicase 53, mitochondrial (616 aa).

The N-terminal 81 residues, 1 to 81 (MITTVLRRSL…DFRASMVSQA (81 aa)), are a transit peptide targeting the mitochondrion. Positions 104-132 (LAISELGISPEIVKALSSKGIEKLFPIQK) match the Q motif motif. One can recognise a Helicase ATP-binding domain in the interval 135-309 (LEPAMEGRDM…KKYLNNPLTV (175 aa)). 148–155 (ARTGTGKT) contacts ATP. A DEAD box motif is present at residues 257–260 (DEAD). The Helicase C-terminal domain occupies 338–482 (IIGPLVTEHA…ELPSIAVERG (145 aa)). Residues 489 to 616 (GIGSRSGGSF…FGSNDGKRSY (128 aa)) are disordered. 2 stretches are compositionally biased toward gly residues: residues 492-501 (SRSGGSFGGG) and 508-531 (SFGG…GRSG). Composition is skewed to low complexity over residues 532–568 (GSSN…SGGR) and 578–587 (GSSNNRSSGF).

It belongs to the DEAD box helicase family. DDX21/DDX50 subfamily.

It localises to the mitochondrion. It catalyses the reaction ATP + H2O = ADP + phosphate + H(+). The chain is DEAD-box ATP-dependent RNA helicase 53, mitochondrial (RH53) from Arabidopsis thaliana (Mouse-ear cress).